The sequence spans 141 residues: Nucleoside diphosphate kinase (141 aa).

Positions 11, 59, 87, 93, 104, and 114 each coordinate ATP. Catalysis depends on H117, which acts as the Pros-phosphohistidine intermediate.

This sequence belongs to the NDK family. Homotetramer. Mg(2+) serves as cofactor.

The protein resides in the cytoplasm. It catalyses the reaction a 2'-deoxyribonucleoside 5'-diphosphate + ATP = a 2'-deoxyribonucleoside 5'-triphosphate + ADP. It carries out the reaction a ribonucleoside 5'-diphosphate + ATP = a ribonucleoside 5'-triphosphate + ADP. In terms of biological role, major role in the synthesis of nucleoside triphosphates other than ATP. The ATP gamma phosphate is transferred to the NDP beta phosphate via a ping-pong mechanism, using a phosphorylated active-site intermediate. This is Nucleoside diphosphate kinase from Haemophilus influenzae (strain ATCC 51907 / DSM 11121 / KW20 / Rd).